Reading from the N-terminus, the 657-residue chain is Endoplasmic reticulum mannosyl-oligosaccharide 1,2-alpha-mannosidase (657 aa).

The Cytoplasmic segment spans residues 1 to 49 (MYPPPPAPAPHRDFISVTLSLGESYDNSKSRRRRSCWRKWKQLSRLQRN). Residues 50 to 70 (VILFVLGFLILCGFLYSLQVS) traverse the membrane as a helical segment. At 71-657 (DQWKALSGSR…AHPLPIWSPA (587 aa)) the chain is on the lumenal side. Ser101 carries the post-translational modification Phosphoserine. The tract at residues 118–157 (HLRRGPPHLQIRPPNTVSKDGMQDDAKEREAALGKAQQEE) is disordered. The span at 138–157 (GMQDDAKEREAALGKAQQEE) shows a compositional bias: basic and acidic residues. Glu288 acts as the Proton donor in catalysis. The active site involves Asp421. A disulfide bridge connects residues Cys485 and Cys514. The active-site Proton donor is the Glu528. Glu557 is a catalytic residue. Ca(2+) is bound at residue Thr646.

It belongs to the glycosyl hydrolase 47 family. Ca(2+) serves as cofactor.

The protein resides in the endoplasmic reticulum membrane. It catalyses the reaction N(4)-(alpha-D-Man-(1-&gt;2)-alpha-D-Man-(1-&gt;2)-alpha-D-Man-(1-&gt;3)-[alpha-D-Man-(1-&gt;2)-alpha-D-Man-(1-&gt;3)-[alpha-D-Man-(1-&gt;2)-alpha-D-Man-(1-&gt;6)]-alpha-D-Man-(1-&gt;6)]-beta-D-Man-(1-&gt;4)-beta-D-GlcNAc-(1-&gt;4)-beta-D-GlcNAc)-L-asparaginyl-[protein] (N-glucan mannose isomer 9A1,2,3B1,2,3) + 4 H2O = N(4)-(alpha-D-Man-(1-&gt;3)-[alpha-D-Man-(1-&gt;3)-[alpha-D-Man-(1-&gt;6)]-alpha-D-Man-(1-&gt;6)]-beta-D-Man-(1-&gt;4)-beta-D-GlcNAc-(1-&gt;4)-beta-D-GlcNAc)-L-asparaginyl-[protein] (N-glucan mannose isomer 5A1,2) + 4 beta-D-mannose. It carries out the reaction N(4)-(alpha-D-Man-(1-&gt;2)-alpha-D-Man-(1-&gt;2)-alpha-D-Man-(1-&gt;3)-[alpha-D-Man-(1-&gt;3)-[alpha-D-Man-(1-&gt;2)-alpha-D-Man-(1-&gt;6)]-alpha-D-Man-(1-&gt;6)]-beta-D-Man-(1-&gt;4)-beta-D-GlcNAc-(1-&gt;4)-beta-D-GlcNAc)-L-asparaginyl-[protein] (N-glucan mannose isomer 8A1,2,3B1,3) + 3 H2O = N(4)-(alpha-D-Man-(1-&gt;3)-[alpha-D-Man-(1-&gt;3)-[alpha-D-Man-(1-&gt;6)]-alpha-D-Man-(1-&gt;6)]-beta-D-Man-(1-&gt;4)-beta-D-GlcNAc-(1-&gt;4)-beta-D-GlcNAc)-L-asparaginyl-[protein] (N-glucan mannose isomer 5A1,2) + 3 beta-D-mannose. It participates in protein modification; protein glycosylation. In terms of biological role, involved in glycoprotein quality control targeting of misfolded glycoproteins for degradation. It primarily trims a single alpha-1,2-linked mannose residue from Man(9)GlcNAc(2) to produce Man(8)GlcNAc(2), but at high enzyme concentrations, as found in the ER quality control compartment (ERQC), it further trims the carbohydrates to Man(5-6)GlcNAc(2). This Rattus norvegicus (Rat) protein is Endoplasmic reticulum mannosyl-oligosaccharide 1,2-alpha-mannosidase (Man1b1).